Reading from the N-terminus, the 337-residue chain is uncharacterized protein (337 aa).

2 helical membrane passes run 4–24 and 26–46; these read FIFF…FSLI and LLLW…LFVL.

The protein belongs to the plectrovirus ORF2 family.

It localises to the host membrane. This is an uncharacterized protein from Spiroplasma virus SpV1-R8A2 B (SpV1).